The chain runs to 76 residues: UPF0235 protein MMAR_2910 (76 aa).

This sequence belongs to the UPF0235 family.

The sequence is that of UPF0235 protein MMAR_2910 from Mycobacterium marinum (strain ATCC BAA-535 / M).